The following is a 155-amino-acid chain: 6,7-dimethyl-8-ribityllumazine synthase (155 aa).

5-amino-6-(D-ribitylamino)uracil-binding positions include tryptophan 24, 58-60 (AFE), and 82-84 (AVI). Position 87–88 (87–88 (GT)) interacts with (2S)-2-hydroxy-3-oxobutyl phosphate. Histidine 90 functions as the Proton donor in the catalytic mechanism. Phenylalanine 115 provides a ligand contact to 5-amino-6-(D-ribitylamino)uracil. Arginine 129 is a (2S)-2-hydroxy-3-oxobutyl phosphate binding site.

Belongs to the DMRL synthase family. In terms of assembly, forms an icosahedral capsid composed of 60 subunits, arranged as a dodecamer of pentamers.

The catalysed reaction is (2S)-2-hydroxy-3-oxobutyl phosphate + 5-amino-6-(D-ribitylamino)uracil = 6,7-dimethyl-8-(1-D-ribityl)lumazine + phosphate + 2 H2O + H(+). It participates in cofactor biosynthesis; riboflavin biosynthesis; riboflavin from 2-hydroxy-3-oxobutyl phosphate and 5-amino-6-(D-ribitylamino)uracil: step 1/2. Its function is as follows. Catalyzes the formation of 6,7-dimethyl-8-ribityllumazine by condensation of 5-amino-6-(D-ribitylamino)uracil with 3,4-dihydroxy-2-butanone 4-phosphate. This is the penultimate step in the biosynthesis of riboflavin. The chain is 6,7-dimethyl-8-ribityllumazine synthase from Saccharophagus degradans (strain 2-40 / ATCC 43961 / DSM 17024).